Reading from the N-terminus, the 516-residue chain is Cytochrome P450 monooxygenase ntnM (516 aa).

A helical membrane pass occupies residues 22 to 42 (IINVILSIAAIALIRALAISI). A heme-binding site is contributed by cysteine 453.

The protein belongs to the cytochrome P450 family. Requires heme as cofactor.

It localises to the membrane. The protein operates within secondary metabolite biosynthesis; terpenoid biosynthesis. In terms of biological role, cytochrome P450 monooxygenase; part of the gene cluster that mediates the biosynthesis of the meroterpenoids nectripenoids A and B, as well as cochliquninone D and isocochliquninone E. The pathway probably begins with the HR-PKS ntnH that catalyzes two chain-extension steps to form a reduced triketide, which then primes the SAT domain in the NR-PKS ntnG to initiate three more cycles of extension to give a linear hexaketide corresponding to the polyketide part of nectripenoids. The FAD-dependent monooxygenase ntnJ then performs an oxidative decarboxylation at C11 of the ntnH/ntnG product, via an electrophilic aromatic hydroxylation with concomitant ipso-decarboxylation. The membrane-bound polyprenyl transferase ntnF then introduces a farnesyl group before the FAD-dependent monooxygenase ntnK functions as the first epoxidase on terminal C12'-C13' olefin, followed by a second epoxidation on C7'-C8' catalyzed by ntnA. The terpene cyclase/mutase ntnI then initiates the sequential tricyclic ring formation through protonation of the terminal epoxide and catalyzes the regioselective and stereoselective 6/6/6-tricyclic ring formation. The cytochrome P450 monooxygenase ntnM may then hydroxylate C1'. This chain is Cytochrome P450 monooxygenase ntnM, found in Nectria sp.